Reading from the N-terminus, the 1305-residue chain is Rho GTPase-activating protein 33 (1305 aa).

Residues 1–64 are disordered; that stretch reads MLQAQKQSDP…KPGKRLSAPR (64 aa). The residue at position 32 (Ser-32) is a Phosphoserine. The PX; atypical domain occupies 83–192; that stretch reads FGHIQLLLSP…CGPVLTWMEL (110 aa). Residues 210 to 272 form the SH3 domain; that stretch reads PAVAAAHVVK…PSECVELFTE (63 aa). The 196-residue stretch at 339 to 534 folds into the Rho-GAP domain; sequence CDLGEHLSNS…FLLTHVEVLF (196 aa). Disordered stretches follow at residues 575-818, 864-1054, and 1115-1305; these read RTQG…LDIS, LSDT…SFFS, and SYSG…RSYC. Low complexity predominate over residues 582–595; it reads TPTEPTTPKTPASP. Ser-594 bears the Phosphoserine mark. Residues 596-608 show a composition bias toward basic and acidic residues; it reads VERRKRERAEKQR. The segment covering 646-669 has biased composition (polar residues); it reads SGSRPDTVTLRSAKSEESLSSQAS. Ser-660 carries the post-translational modification Phosphoserine. Residues 694–733 show a composition bias toward low complexity; sequence APAGSCESLSSSSSSSSSSSSSSSSESSAGGLGPLSGSPS. Ser-749 is subject to Phosphoserine. Residues 774-786 are compositionally biased toward pro residues; that stretch reads PGDPAPPASPAPP. Low complexity predominate over residues 787–798; that stretch reads ASASAFPPRATP. A compositionally biased stretch (polar residues) spans 864–873; that stretch reads LSDTCQQEIS. Positions 895-915 are enriched in pro residues; the sequence is LLPPPLPLLRPGGAPPPPPKN. Residues 916 to 940 are compositionally biased toward low complexity; it reads PARLMALALAERAQQVAEQQSQQEQ. Composition is skewed to polar residues over residues 992–1020, 1039–1054, and 1115–1125; these read RQQS…SQVS, SPCS…SFFS, and SYSGPSRSWSP. Tyr-1188 carries the post-translational modification Phosphotyrosine. Residues 1194-1208 show a composition bias toward low complexity; that stretch reads GPRGPSPASSSSSSP. Position 1263 is an omega-N-methylarginine (Arg-1263). A compositionally biased stretch (polar residues) spans 1292–1305; that stretch reads SWSLHSEGQTRSYC.

This sequence belongs to the PX domain-containing GAP family. As to quaternary structure, specifically interacts with CDC42 and RHOQ/TC10 through its Rho-GAP domain. Interacts with NEK6. Highly expressed in brain and testis. Also expressed in white adipose tissue (WAT) and muscle at a low level.

It is found in the cell membrane. Its function is as follows. May be involved in several stages of intracellular trafficking. Could play an important role in the regulation of glucose transport by insulin. May act as a downstream effector of RHOQ/TC10 in the regulation of insulin-stimulated glucose transport. The polypeptide is Rho GTPase-activating protein 33 (Arhgap33) (Mus musculus (Mouse)).